Consider the following 240-residue polypeptide: Mannose-binding protein C (240 aa).

The signal sequence occupies residues 1–18 (MSLFPSLHLLLLIVMTAS). Collagen-like domains lie at 39-61 (SPGI…KGEP) and 67-97 (GLQG…GDSG). Pro-46 bears the Hydroxyproline mark. The tract at residues 48-102 (KDGLDGAKGEKGEPGQGLIGLQGLPGMVGPQGSPGIPGLPGLKGQKGDSGIDPGN) is disordered. A compositionally biased stretch (basic and acidic residues) spans 49-60 (DGLDGAKGEKGE). Pro-72, Pro-81, and Pro-87 each carry hydroxyproline. Positions 104-122 (LANLRSELDNIKKWLIFAQ) form a coiled coil. Residues 126–237 (VGKKLYLTNG…CSSQLSAVCE (112 aa)) form the C-type lectin domain. 2 disulfides stabilise this stretch: Cys-147-Cys-236 and Cys-214-Cys-228.

Interacts with MASP1 and MASP2. Interacts with MEP1A and MEP1B and may inhibit their catalytic activity. Forms oligomeric complexes of 2 or 3 homotrimers. As to expression, expressed in liver. Weakly expressed in kidney and testis.

Its subcellular location is the secreted. In terms of biological role, calcium-dependent lectin involved in innate immune defense. Binds mannose, fucose and N-acetylglucosamine on different microorganisms and activates the lectin complement pathway. Binds to late apoptotic cells, as well as to apoptotic blebs and to necrotic cells, but not to early apoptotic cells, facilitating their uptake by macrophages. According to some authors, it only binds mannose. This is Mannose-binding protein C from Sus scrofa (Pig).